An 89-amino-acid chain; its full sequence is UPF0367 protein MAE_19160 (89 aa).

The protein belongs to the UPF0367 family.

This Microcystis aeruginosa (strain NIES-843 / IAM M-2473) protein is UPF0367 protein MAE_19160.